A 200-amino-acid polypeptide reads, in one-letter code: MTVVIGLTGGIASGKSTVSQMFRELSIPVIDADIIAREVVEKGKPAYNKIVEVFGTEVLQEDGELDRPKLGSVVFYNEEKRLQLNKIVHPAVREEMNRQKEMYIKEGMQAVVLDIPLLFESKLTSLVDRVLVVAVKPHTQLERLMKRNNFSEEEATARIQSQMPLEEKVKNADEVINNDGTIMGTKTQLQAILKKWNIID.

The 197-residue stretch at 4–200 (VIGLTGGIAS…AILKKWNIID (197 aa)) folds into the DPCK domain. 12–17 (ASGKST) contributes to the ATP binding site.

This sequence belongs to the CoaE family.

It is found in the cytoplasm. The enzyme catalyses 3'-dephospho-CoA + ATP = ADP + CoA + H(+). It participates in cofactor biosynthesis; coenzyme A biosynthesis; CoA from (R)-pantothenate: step 5/5. Its function is as follows. Catalyzes the phosphorylation of the 3'-hydroxyl group of dephosphocoenzyme A to form coenzyme A. The sequence is that of Dephospho-CoA kinase from Bacillus anthracis.